The chain runs to 60 residues: Cytotoxin 1 (60 aa).

Cystine bridges form between C3–C21, C14–C38, C42–C53, and C54–C59.

The protein belongs to the three-finger toxin family. Short-chain subfamily. Type IA cytotoxin sub-subfamily. Monomer in solution; Homodimer and oligomer in the presence of negatively charged lipids forming a pore with a size ranging between 20 and 30 Angstroms. As to expression, expressed by the venom gland.

It is found in the secreted. The protein resides in the target cell membrane. Functionally, shows cytolytic activity on many different cells by forming pore in lipid membranes. In vivo, increases heart rate or kills the animal by cardiac arrest. In addition, it binds to heparin with high affinity, interacts with Kv channel-interacting protein 1 (KCNIP1) in a calcium-independent manner, and binds to integrin alpha-V/beta-3 (ITGAV/ITGB3) with moderate affinity. This Naja nivea (Cape cobra) protein is Cytotoxin 1.